Reading from the N-terminus, the 550-residue chain is Dihydroxy-acid dehydratase (550 aa).

Aspartate 81 contributes to the Mg(2+) binding site. A [2Fe-2S] cluster-binding site is contributed by cysteine 122. Residues aspartate 123 and lysine 124 each contribute to the Mg(2+) site. Lysine 124 bears the N6-carboxylysine mark. Residue cysteine 194 participates in [2Fe-2S] cluster binding. Mg(2+) is bound at residue glutamate 442. The Proton acceptor role is filled by serine 467.

Belongs to the IlvD/Edd family. As to quaternary structure, homodimer. [2Fe-2S] cluster serves as cofactor. The cofactor is Mg(2+).

The enzyme catalyses (2R)-2,3-dihydroxy-3-methylbutanoate = 3-methyl-2-oxobutanoate + H2O. The catalysed reaction is (2R,3R)-2,3-dihydroxy-3-methylpentanoate = (S)-3-methyl-2-oxopentanoate + H2O. The protein operates within amino-acid biosynthesis; L-isoleucine biosynthesis; L-isoleucine from 2-oxobutanoate: step 3/4. Its pathway is amino-acid biosynthesis; L-valine biosynthesis; L-valine from pyruvate: step 3/4. In terms of biological role, functions in the biosynthesis of branched-chain amino acids. Catalyzes the dehydration of (2R,3R)-2,3-dihydroxy-3-methylpentanoate (2,3-dihydroxy-3-methylvalerate) into 2-oxo-3-methylpentanoate (2-oxo-3-methylvalerate) and of (2R)-2,3-dihydroxy-3-methylbutanoate (2,3-dihydroxyisovalerate) into 2-oxo-3-methylbutanoate (2-oxoisovalerate), the penultimate precursor to L-isoleucine and L-valine, respectively. The protein is Dihydroxy-acid dehydratase of Methanoregula boonei (strain DSM 21154 / JCM 14090 / 6A8).